Consider the following 410-residue polypeptide: MKNKLIERLISYAKVDTQSNENSQTTPSTPGQLALANMLVEELKEIGMKDVTIDENGYVMATLPSNTEKEVPTIGFLAHVDTATDFTGKNVNPQVIEQYDGKDIVLNESLNVVLSPKEFPELADYAGHTLITTDGTTLLGADNKAGISEIMTAMEYLIAHPEIKHGKIRVAFTPDEEIGRGPHKFDVEAFNAKFAYTVDGGPLGELQYESFNAAAAKITCKGTNVHPGTAKGKMVNAAKIAMQFHAALPENEAPEFTEGYEGFYHLLSIKGDVSETSLSYIIRDFDRDRFNERKDTVQKIANNLKAKYGENSVTVDMNDQYYNMREKIEPVKEIVDIAYKAMKNLDIEPVVKPIRGGTDGSQLSYMGLPCPNIFTGGENFHGKYEYISADNMVKAANVIVEIVKLFEERA.

Histidine 79 contacts Zn(2+). Aspartate 81 is a catalytic residue. Residue aspartate 142 participates in Zn(2+) binding. The active-site Proton acceptor is the glutamate 176. Zn(2+) is bound by residues glutamate 177, aspartate 199, and histidine 381.

This sequence belongs to the peptidase M20B family. It depends on Zn(2+) as a cofactor.

The protein localises to the cytoplasm. The catalysed reaction is Release of the N-terminal residue from a tripeptide.. Functionally, cleaves the N-terminal amino acid of tripeptides. The protein is Peptidase T of Bacillus licheniformis (strain ATCC 14580 / DSM 13 / JCM 2505 / CCUG 7422 / NBRC 12200 / NCIMB 9375 / NCTC 10341 / NRRL NRS-1264 / Gibson 46).